Reading from the N-terminus, the 296-residue chain is 4-diphosphocytidyl-2-C-methyl-D-erythritol kinase (296 aa).

The active site involves lysine 13. 104 to 114 serves as a coordination point for ATP; it reads PMGGGIGGGSS. The active site involves aspartate 146.

Belongs to the GHMP kinase family. IspE subfamily.

The enzyme catalyses 4-CDP-2-C-methyl-D-erythritol + ATP = 4-CDP-2-C-methyl-D-erythritol 2-phosphate + ADP + H(+). The protein operates within isoprenoid biosynthesis; isopentenyl diphosphate biosynthesis via DXP pathway; isopentenyl diphosphate from 1-deoxy-D-xylulose 5-phosphate: step 3/6. Functionally, catalyzes the phosphorylation of the position 2 hydroxy group of 4-diphosphocytidyl-2C-methyl-D-erythritol. The polypeptide is 4-diphosphocytidyl-2-C-methyl-D-erythritol kinase (Hahella chejuensis (strain KCTC 2396)).